The following is a 455-amino-acid chain: Folate transporter 2 (455 aa).

Transmembrane regions (helical) follow at residues 42 to 64 (IVVY…IYYL), 84 to 103 (YIPF…FSIF), 110 to 131 (YLFL…LNLS), 137 to 157 (LILF…EALV), 177 to 195 (IASK…GYFL), 201 to 221 (EYIF…CLFL), 242 to 261 (FINT…YMSG), and 281 to 301 (SFMG…IIIY). Asn307 carries N-linked (GlcNAc...) asparagine glycosylation. A run of 2 helical transmembrane segments spans residues 313-331 (TLII…PIIL) and 347-367 (VLSG…PLFI). Residue Asn416 is glycosylated (N-linked (GlcNAc...) asparagine). The helical transmembrane segment at 417–438 (LSLYILTCGFFLLFSLTLVPLL) threads the bilayer.

This sequence belongs to the major facilitator superfamily. Folate-biopterin transporter (TC 2.A.71) family.

It is found in the cell membrane. It catalyses the reaction folate(in) + H(+)(in) = folate(out) + H(+)(out). It carries out the reaction (6S)-5-methyl-5,6,7,8-tetrahydrofolate(in) + H(+)(in) = (6S)-5-methyl-5,6,7,8-tetrahydrofolate(out) + H(+)(out). Transport of folates is inhibited by probenecid and methotrexate. Its function is as follows. Folate transporter with broad substrate specificity. Transports folic acid, folinic acid, pteroic acid, dihydropteroic acid, the folate precursor p-amino benzoic acid (pABA) and the human folate catabolite pABA monoglutamate. Can transport 5-methyltetrahydrofolate with low efficiency. This is Folate transporter 2 from Plasmodium falciparum (isolate 3D7).